A 538-amino-acid polypeptide reads, in one-letter code: Putative outer membrane porin BglH (538 aa).

Residues 1 to 25 form the signal peptide; sequence MFRRNIITSAILLMAPLAFSAQSLA.

The protein belongs to the porin LamB (TC 1.B.3) family.

The protein resides in the cell outer membrane. May be a sugar porin with a broad carbohydrate specificity. The sequence is that of Putative outer membrane porin BglH (bglH) from Escherichia coli (strain UTI89 / UPEC).